The chain runs to 477 residues: Glycogen synthase (477 aa).

Lys-15 lines the ADP-alpha-D-glucose pocket.

Belongs to the glycosyltransferase 1 family. Bacterial/plant glycogen synthase subfamily.

The enzyme catalyses [(1-&gt;4)-alpha-D-glucosyl](n) + ADP-alpha-D-glucose = [(1-&gt;4)-alpha-D-glucosyl](n+1) + ADP + H(+). The protein operates within glycan biosynthesis; glycogen biosynthesis. Synthesizes alpha-1,4-glucan chains using ADP-glucose. The chain is Glycogen synthase from Salmonella arizonae (strain ATCC BAA-731 / CDC346-86 / RSK2980).